A 188-amino-acid chain; its full sequence is Der GTPase-activating protein YihI (188 aa).

2 disordered regions span residues 1–80 (MKQP…VPVP) and 162–188 (DEDD…KDTF). The segment covering 27–37 (TRDELDAEARD) has biased composition (basic and acidic residues). Residues 47 to 57 (NRSGARTNVEG) are compositionally biased toward polar residues.

Belongs to the YihI family. As to quaternary structure, interacts with Der.

Its function is as follows. A GTPase-activating protein (GAP) that modifies Der/EngA GTPase function. May play a role in ribosome biogenesis. The polypeptide is Der GTPase-activating protein YihI (Yersinia pseudotuberculosis serotype O:3 (strain YPIII)).